The primary structure comprises 162 residues: Endoribonuclease YbeY (162 aa).

Residues His-128, His-132, and His-138 each coordinate Zn(2+).

It belongs to the endoribonuclease YbeY family. Zn(2+) is required as a cofactor.

It is found in the cytoplasm. In terms of biological role, single strand-specific metallo-endoribonuclease involved in late-stage 70S ribosome quality control and in maturation of the 3' terminus of the 16S rRNA. This is Endoribonuclease YbeY from Lactococcus lactis subsp. lactis (strain IL1403) (Streptococcus lactis).